The following is a 176-amino-acid chain: Lipoprotein signal peptidase (176 aa).

The next 4 membrane-spanning stretches (helical) occupy residues Ala-11 to Leu-31, Ala-38 to Phe-58, Trp-76 to His-96, and Leu-101 to Leu-121. Residues Asp-128 and Asp-146 contribute to the active site. The helical transmembrane segment at Trp-139–Ala-159 threads the bilayer.

This sequence belongs to the peptidase A8 family.

It is found in the cell inner membrane. The enzyme catalyses Release of signal peptides from bacterial membrane prolipoproteins. Hydrolyzes -Xaa-Yaa-Zaa-|-(S,diacylglyceryl)Cys-, in which Xaa is hydrophobic (preferably Leu), and Yaa (Ala or Ser) and Zaa (Gly or Ala) have small, neutral side chains.. It functions in the pathway protein modification; lipoprotein biosynthesis (signal peptide cleavage). This protein specifically catalyzes the removal of signal peptides from prolipoproteins. In Azoarcus sp. (strain BH72), this protein is Lipoprotein signal peptidase.